The chain runs to 295 residues: Sulfotransferase 1A1 (295 aa).

48-53 (KSGTTW) provides a ligand contact to 3'-phosphoadenylyl sulfate. Residue 106–108 (KTH) coordinates substrate. Histidine 108 (proton acceptor) is an active-site residue. Residues arginine 130, serine 138, tyrosine 193, 227–232 (TSFKEM), and 255–259 (FMRKG) contribute to the 3'-phosphoadenylyl sulfate site. Phosphoserine is present on serine 138.

It belongs to the sulfotransferase 1 family. Homodimer. In terms of tissue distribution, liver, lung, adrenal, brain, platelets and skin.

The protein resides in the cytoplasm. It catalyses the reaction a phenol + 3'-phosphoadenylyl sulfate = an aryl sulfate + adenosine 3',5'-bisphosphate + H(+). It carries out the reaction 17beta-estradiol + 3'-phosphoadenylyl sulfate = 17beta-estradiol 3-sulfate + adenosine 3',5'-bisphosphate + H(+). The enzyme catalyses 4-ethylphenol + 3'-phosphoadenylyl sulfate = 4-ethylphenyl sulfate + adenosine 3',5'-bisphosphate + H(+). The catalysed reaction is 4-nitrophenol + 3'-phosphoadenylyl sulfate = 4-nitrophenyl sulfate + adenosine 3',5'-bisphosphate. It catalyses the reaction dopamine + 3'-phosphoadenylyl sulfate = dopamine 3-O-sulfate + adenosine 3',5'-bisphosphate + H(+). It carries out the reaction dopamine + 3'-phosphoadenylyl sulfate = dopamine 4-O-sulfate + adenosine 3',5'-bisphosphate + H(+). The enzyme catalyses 3,3',5-triiodo-L-thyronine + 3'-phosphoadenylyl sulfate = 3,3',5-triiodo-L-thyronine sulfate + adenosine 3',5'-bisphosphate + H(+). The catalysed reaction is 3,3',5'-triiodo-L-thyronine + 3'-phosphoadenylyl sulfate = 3,3',5'-triiodo-L-thyronine sulfate + adenosine 3',5'-bisphosphate + H(+). It catalyses the reaction 3,3'-diiodo-L-thyronine + 3'-phosphoadenylyl sulfate = 3,3'-diiodo-L-thyronine sulfate + adenosine 3',5'-bisphosphate + H(+). It carries out the reaction L-thyroxine + 3'-phosphoadenylyl sulfate = L-thyroxine sulfate + adenosine 3',5'-bisphosphate + H(+). In terms of biological role, sulfotransferase that utilizes 3'-phospho-5'-adenylyl sulfate (PAPS) as sulfonate donor to catalyze the sulfate conjugation of a wide variety of acceptor molecules bearing a hydroxyl or an amine group. Sulfonation increases the water solubility of most compounds, and therefore their renal excretion, but it can also result in bioactivation to form active metabolites. Displays broad substrate specificity for small phenolic compounds. Plays an important role in the sulfonation of endogenous molecules such as steroid hormones. Mediates the sulfate conjugation of a variety of xenobiotics, including the drugs acetaminophen and minoxidil. Mediates also the metabolic activation of carcinogenic N-hydroxyarylamines leading to highly reactive intermediates capable of forming DNA adducts, potentially resulting in mutagenesis. May play a role in gut microbiota-host metabolic interaction. O-sulfonates 4-ethylphenol (4-EP), a dietary tyrosine-derived metabolite produced by gut bacteria. The product 4-EPS crosses the blood-brain barrier and may negatively regulate oligodendrocyte maturation and myelination, affecting the functional connectivity of different brain regions associated with the limbic system. Catalyzes the sulfate conjugation of dopamine. Catalyzes the sulfation of T4 (L-thyroxine/3,5,3',5'-tetraiodothyronine), T3 (3,5,3'-triiodothyronine), rT3 (3,3',5'-triiodothyronine) and 3,3'-T2 (3,3'-diiodothyronine), with a substrate preference of 3,3'-T2 &gt; rT3 &gt; T3 &gt; T4. The protein is Sulfotransferase 1A1 (SULT1A1) of Homo sapiens (Human).